The following is a 166-amino-acid chain: MASTQVVFIVTLFLYLLITRWRRKNEKSFIASEEPKQPEWRDYTPAELKEYNGSKNSLVFLAIKGTVYNVTMGSKFYGPQGPYSAFAGHDASRGLAKNSFDDEFIPDSDAEELDDCSDLNDEERQALNDWKAFFDQKYQAVGRLISPREARAAATISETEEKVAHN.

A helical transmembrane segment spans residues 4–21 (TQVVFIVTLFLYLLITRW). The Cytochrome b5 heme-binding domain maps to 42-145 (DYTPAELKEY…QKYQAVGRLI (104 aa)). Position 108 is a phosphoserine (Ser108). Heme is bound at residue Tyr138.

Belongs to the cytochrome b5 family. MAPR subfamily. As to quaternary structure, interacts with erg5 and erg11.

Its subcellular location is the endoplasmic reticulum. It localises to the membrane. Its function is as follows. Required for sterol biosynthesis. Functions as a positive regulator of cytochrome P450 enzymes erg5 and erg11. Function requires bound heme. The sequence is that of Cytochrome P450 regulator dap1 (dap1) from Schizosaccharomyces pombe (strain 972 / ATCC 24843) (Fission yeast).